Reading from the N-terminus, the 234-residue chain is LexA repressor (234 aa).

The H-T-H motif DNA-binding region spans 26 to 46; the sequence is FDEMKDALDLRSKSGIHRLIT. Residues 80–107 are disordered; it reads RGFTPSVIEGNLGKVRPPSPQHAEDDSD. Catalysis depends on for autocatalytic cleavage activity residues S155 and K193.

The protein belongs to the peptidase S24 family. As to quaternary structure, homodimer.

It carries out the reaction Hydrolysis of Ala-|-Gly bond in repressor LexA.. Its function is as follows. Represses a number of genes involved in the response to DNA damage (SOS response), including recA and lexA. In the presence of single-stranded DNA, RecA interacts with LexA causing an autocatalytic cleavage which disrupts the DNA-binding part of LexA, leading to derepression of the SOS regulon and eventually DNA repair. The protein is LexA repressor of Rhodopseudomonas palustris (strain HaA2).